The chain runs to 158 residues: NAD(P)H-quinone oxidoreductase subunit J, chloroplastic (158 aa).

This sequence belongs to the complex I 30 kDa subunit family. In terms of assembly, NDH is composed of at least 16 different subunits, 5 of which are encoded in the nucleus.

It localises to the plastid. The protein localises to the chloroplast thylakoid membrane. The enzyme catalyses a plastoquinone + NADH + (n+1) H(+)(in) = a plastoquinol + NAD(+) + n H(+)(out). It catalyses the reaction a plastoquinone + NADPH + (n+1) H(+)(in) = a plastoquinol + NADP(+) + n H(+)(out). In terms of biological role, NDH shuttles electrons from NAD(P)H:plastoquinone, via FMN and iron-sulfur (Fe-S) centers, to quinones in the photosynthetic chain and possibly in a chloroplast respiratory chain. The immediate electron acceptor for the enzyme in this species is believed to be plastoquinone. Couples the redox reaction to proton translocation, and thus conserves the redox energy in a proton gradient. The chain is NAD(P)H-quinone oxidoreductase subunit J, chloroplastic from Vitis vinifera (Grape).